The chain runs to 545 residues: Coiled-coil domain-containing protein 60 (545 aa).

Residues 72 to 99 adopt a coiled-coil conformation; the sequence is NILREENAMKKKQQLLQKLKEEELNKFQ. Residues 224–284 are disordered; the sequence is PAIRTAMASR…DNESSSTKPE (61 aa). The span at 238-259 shows a compositional bias: low complexity; it reads RGSTLSLTRTSGGSSPQSSMMS.

The polypeptide is Coiled-coil domain-containing protein 60 (Ccdc60) (Mus musculus (Mouse)).